Consider the following 150-residue polypeptide: Kirola (150 aa).

The residue at position 1 (Met1) is an N-acetylmethionine.

Belongs to the MLP family. As to quaternary structure, monomer. Post-translationally, the N-terminus is blocked.

The sequence is that of Kirola from Actinidia deliciosa (Kiwi).